A 430-amino-acid chain; its full sequence is Adenylosuccinate synthetase (430 aa).

GTP-binding positions include 13–19 (GDEGKGK) and 41–43 (GHT). Asp-14 serves as the catalytic Proton acceptor. Mg(2+) is bound by residues Asp-14 and Gly-41. IMP contacts are provided by residues 14-17 (DEGK), 39-42 (NAGH), Thr-130, Arg-144, Gln-225, Thr-240, and Arg-304. His-42 acts as the Proton donor in catalysis. 300-306 (ASTGRPR) provides a ligand contact to substrate. Residues Arg-306, 332–334 (KLD), and 414–416 (STG) contribute to the GTP site.

It belongs to the adenylosuccinate synthetase family. Homodimer. It depends on Mg(2+) as a cofactor.

Its subcellular location is the cytoplasm. The catalysed reaction is IMP + L-aspartate + GTP = N(6)-(1,2-dicarboxyethyl)-AMP + GDP + phosphate + 2 H(+). Its pathway is purine metabolism; AMP biosynthesis via de novo pathway; AMP from IMP: step 1/2. Plays an important role in the de novo pathway of purine nucleotide biosynthesis. Catalyzes the first committed step in the biosynthesis of AMP from IMP. This chain is Adenylosuccinate synthetase, found in Xylella fastidiosa (strain M23).